A 232-amino-acid polypeptide reads, in one-letter code: Ubiquinone biosynthesis O-methyltransferase (232 aa).

S-adenosyl-L-methionine contacts are provided by Arg-36, Gly-55, Asp-76, and Leu-120.

It belongs to the methyltransferase superfamily. UbiG/COQ3 family.

The enzyme catalyses a 3-demethylubiquinol + S-adenosyl-L-methionine = a ubiquinol + S-adenosyl-L-homocysteine + H(+). It catalyses the reaction a 3-(all-trans-polyprenyl)benzene-1,2-diol + S-adenosyl-L-methionine = a 2-methoxy-6-(all-trans-polyprenyl)phenol + S-adenosyl-L-homocysteine + H(+). Its pathway is cofactor biosynthesis; ubiquinone biosynthesis. Functionally, O-methyltransferase that catalyzes the 2 O-methylation steps in the ubiquinone biosynthetic pathway. This is Ubiquinone biosynthesis O-methyltransferase from Pseudomonas paraeruginosa (strain DSM 24068 / PA7) (Pseudomonas aeruginosa (strain PA7)).